The sequence spans 1865 residues: Endoribonuclease Dicer (1865 aa).

In terms of domain architecture, Helicase ATP-binding spans 41 to 213 (LLEAALEHNT…DLEEKIQNLE (173 aa)). Residue 54–61 (LNTGSGKT) participates in ATP binding. A DECH box motif is present at residues 161–164 (DECH). The tract at residues 397 to 417 (SWSDSEDDDEDEEAEAKEKTE) is disordered. The span at 400-411 (DSEDDDEDEEAE) shows a compositional bias: acidic residues. In terms of domain architecture, Helicase C-terminal spans 419–588 (NFPSPFTNIL…SAECNDFELE (170 aa)). In terms of domain architecture, Dicer dsRNA-binding fold spans 616-708 (AIGHVNRYCA…MPVGKETVKY (93 aa)). Positions 713–732 (DLHDEEETSVPGRPGSTKRR) are disordered. Residues 881-1028 (KFMEDIEKSE…LVPELCAIHP (148 aa)) form the PAZ domain. Composition is skewed to polar residues over residues 1111 to 1128 (GTSSDSNHTAPESCSMEV) and 1192 to 1201 (STQTTTSVSV). 2 disordered regions span residues 1111–1142 (GTSSDSNHTAPESCSMEVSQPPEGAPNTPDEK) and 1190–1259 (DLST…DCRS). The span at 1240-1252 (SETATSTPAPSET) shows a compositional bias: low complexity. The RNase III 1 domain maps to 1262–1385 (AGPAWDSPKT…TDKWDSDENK (124 aa)). 3 residues coordinate Mg(2+): E1298, D1377, and D1380. Positions 1373 to 1417 (KSSTDKWDSDENKDLANGKASDDEDEDDDDEPEEAEVEPSKEDVN) are disordered. The span at 1374 to 1388 (SSTDKWDSDENKDLA) shows a compositional bias: basic and acidic residues. Over residues 1394 to 1409 (DDEDEDDDDEPEEAEV) the composition is skewed to acidic residues. An RNase III 2 domain is found at 1609–1767 (FLNFESKINY…LAGAIYMDSG (159 aa)). 3 residues coordinate Mg(2+): E1648, D1753, and E1756. The 66-residue stretch at 1792-1857 (VPRSPVRELL…ARRALRSLKA (66 aa)) folds into the DRBM domain.

Belongs to the helicase family. Dicer subfamily. In terms of assembly, component of the RISC loading complex (RLC), or micro-RNA (miRNA) loading complex (miRLC), which is composed of dicer1, ago2 and tarbp2; dicer1 and tarbp2 are required to process precursor miRNAs (pre-miRNAs) to mature miRNAs and then load them onto ago2. Note that the trimeric RLC/miRLC is also referred to as RISC. It depends on Mg(2+) as a cofactor. The cofactor is Mn(2+).

It localises to the cytoplasm. It catalyses the reaction Endonucleolytic cleavage to 5'-phosphomonoester.. Its function is as follows. Double-stranded RNA (dsRNA) endoribonuclease playing a central role in short dsRNA-mediated post-transcriptional gene silencing. Cleaves naturally occurring long dsRNAs and short hairpin pre-microRNAs (miRNA) into fragments of twenty-one to twenty-three nucleotides with 3' overhang of two nucleotides, producing respectively short interfering RNAs (siRNA) and mature microRNAs. SiRNAs and miRNAs serve as guide to direct the RNA-induced silencing complex (RISC) to complementary RNAs to degrade them or prevent their translation. Gene silencing mediated by siRNAs, also called RNA interference, controls the elimination of transcripts from mobile and repetitive DNA elements of the genome but also the degradation of exogenous RNA of viral origin for instance. The miRNA pathway on the other side is a mean to specifically regulate the expression of target genes. In Danio rerio (Zebrafish), this protein is Endoribonuclease Dicer (dicer1).